The primary structure comprises 369 residues: Phenylalanine--tRNA ligase alpha subunit (369 aa).

E270 provides a ligand contact to Mg(2+).

The protein belongs to the class-II aminoacyl-tRNA synthetase family. Phe-tRNA synthetase alpha subunit type 1 subfamily. Tetramer of two alpha and two beta subunits. Requires Mg(2+) as cofactor.

It is found in the cytoplasm. The enzyme catalyses tRNA(Phe) + L-phenylalanine + ATP = L-phenylalanyl-tRNA(Phe) + AMP + diphosphate + H(+). The polypeptide is Phenylalanine--tRNA ligase alpha subunit (Phenylobacterium zucineum (strain HLK1)).